Consider the following 384-residue polypeptide: Carbamoyl phosphate synthase small chain (384 aa).

Residues 1-192 (MIKKIPAILV…LADRNREKIY (192 aa)) form a CPSase region. Residues serine 51, glycine 244, and glycine 246 each coordinate L-glutamine. In terms of domain architecture, Glutamine amidotransferase type-1 spans 196-382 (KVIVIDFGVK…IEIMKQFRKE (187 aa)). The active-site Nucleophile is cysteine 272. Residues methionine 273, glutamine 276, asparagine 312, glycine 314, and phenylalanine 315 each contribute to the L-glutamine site. Active-site residues include histidine 355 and glutamate 357.

This sequence belongs to the CarA family. In terms of assembly, composed of two chains; the small (or glutamine) chain promotes the hydrolysis of glutamine to ammonia, which is used by the large (or ammonia) chain to synthesize carbamoyl phosphate. Tetramer of heterodimers (alpha,beta)4.

It is found in the plastid. The protein resides in the chloroplast. It carries out the reaction hydrogencarbonate + L-glutamine + 2 ATP + H2O = carbamoyl phosphate + L-glutamate + 2 ADP + phosphate + 2 H(+). It catalyses the reaction L-glutamine + H2O = L-glutamate + NH4(+). It functions in the pathway amino-acid biosynthesis; L-arginine biosynthesis; carbamoyl phosphate from bicarbonate: step 1/1. Its pathway is pyrimidine metabolism; UMP biosynthesis via de novo pathway; (S)-dihydroorotate from bicarbonate: step 1/3. Its function is as follows. Small subunit of the glutamine-dependent carbamoyl phosphate synthetase (CPSase). CPSase catalyzes the formation of carbamoyl phosphate from the ammonia moiety of glutamine, carbonate, and phosphate donated by ATP, constituting the first step of 2 biosynthetic pathways, one leading to arginine and/or urea and the other to pyrimidine nucleotides. The small subunit (glutamine amidotransferase) binds and cleaves glutamine to supply the large subunit with the substrate ammonia. The chain is Carbamoyl phosphate synthase small chain from Porphyra purpurea (Red seaweed).